The chain runs to 811 residues: Probable glutamine--tRNA ligase (811 aa).

Positions 190–217 (DAAAGKKKGAKAKNSKQKTVDSGKAKEQ) are disordered. The segment covering 194-205 (GKKKGAKAKNSK) has biased composition (basic residues). Positions 207-217 (KTVDSGKAKEQ) are enriched in basic and acidic residues. A 'HIGH' region motif is present at residues 269–279 (PEPNGYLHIGH). ATP contacts are provided by residues 270-272 (EPN) and 276-282 (HIGHSKA). 2 residues coordinate L-glutamine: D302 and Y447. ATP-binding positions include T466, 495-496 (RL), and 503-505 (MSK). The 'KMSKS' region motif lies at 502–506 (LMSKR).

It belongs to the class-I aminoacyl-tRNA synthetase family.

Its subcellular location is the cytoplasm. The enzyme catalyses tRNA(Gln) + L-glutamine + ATP = L-glutaminyl-tRNA(Gln) + AMP + diphosphate. This chain is Probable glutamine--tRNA ligase (qrs1), found in Schizosaccharomyces pombe (strain 972 / ATCC 24843) (Fission yeast).